The primary structure comprises 963 residues: Kinesin-1 heavy chain (963 aa).

An N-acetylalanine modification is found at Ala-2. The 318-residue stretch at 8 to 325 folds into the Kinesin motor domain; that stretch reads NIKVMCRFRP…LLFGQRAKTI (318 aa). 85–92 serves as a coordination point for ATP; it reads GQTSSGKT. Residue Lys-213 forms a Glycyl lysine isopeptide (Lys-Gly) (interchain with G-Cter in SUMO2) linkage. Residues 329-914 adopt a coiled-coil conformation; sequence VCVNVELTAE…AVRSKNMARR (586 aa). Residues 908-963 are disordered; the sequence is SKNMARRGHSAQIAKPIRPGQHPAASPTHPGTVRGGGSFVQNNQPVGLRGGGGKQS. The globular stretch occupies residues 915-963; that stretch reads GHSAQIAKPIRPGQHPAASPTHPGTVRGGGSFVQNNQPVGLRGGGGKQS. A phosphoserine mark is found at Ser-933 and Ser-945. The residue at position 956 (Arg-956) is an Omega-N-methylarginine.

The protein belongs to the TRAFAC class myosin-kinesin ATPase superfamily. Kinesin family. Kinesin subfamily. In terms of assembly, oligomer composed of two heavy chains and two light chains. Interacts with GRIP1 and PPP1R42. Interacts with SYBU. Interacts with JAKMIP1. Interacts with PLEKHM2. Interacts with ECPAS. Interacts with ZFYVE27. Found in a complex with OGT, RHOT1, RHOT2 and TRAK1. Interacts with APP (via cytoplasmic domain).

Its subcellular location is the cytoplasm. The protein resides in the cytoskeleton. It localises to the cytolytic granule membrane. The protein localises to the lysosome membrane. Microtubule-dependent motor required for normal distribution of mitochondria and lysosomes. May be involved in the mechanisms of growth arrest induced by exposure to DNA-damaging drugs or by cellular senescence. Can induce formation of neurite-like membrane protrusions in non-neuronal cells in a ZFYVE27-dependent manner. Regulates centrosome and nuclear positioning during mitotic entry. During the G2 phase of the cell cycle in a BICD2-dependent manner, antagonizes dynein function and drives the separation of nuclei and centrosomes. Required for anterograde axonal transportation of MAPK8IP3/JIP3 which is essential for MAPK8IP3/JIP3 function in axon elongation. Through binding with PLEKHM2 and ARL8B, directs lysosome movement toward microtubule plus ends. Involved in NK cell-mediated cytotoxicity. Drives the polarization of cytolytic granules and microtubule-organizing centers (MTOCs) toward the immune synapse between effector NK lymphocytes and target cells. The sequence is that of Kinesin-1 heavy chain (Kif5b) from Mus musculus (Mouse).